We begin with the raw amino-acid sequence, 374 residues long: MFEMGPVGTRLPAMTSPAHNHYSYHSPTSSDRGRSRQNSDAMDIQSITEREPATRYAVAGGPAPWNRNGSPSMSPMYSNNSERNQFHEENGRTYHGFRRGMYFLPCDEQEQDRLDIFHKLFTVARVSESLIYAPHPTNGRFLDLGCGTGIWAIEVANKYPDAFVAGVDLAPIQPPNHPKNCEFYAPFDFEAPWAMGEDSWDLIHLQMGCGSVMGWPNLYRRIFAHLRPGAWFEQVEIDFEPRCDDRSLDGTALRHWYDCLKQATAETMRPIAHSSRDTIKDLQDAGFTEIDHQIVGLPLNPWHQDEHERKVARWYNLAVSESIENLSLAPFSRVYRWPLERIQQLAADVKSEAFNKEIHAYNILHIYQARKPLR.

The disordered stretch occupies residues 1–75 (MFEMGPVGTR…NRNGSPSMSP (75 aa)). The span at 23 to 40 (SYHSPTSSDRGRSRQNSD) shows a compositional bias: polar residues. The residue at position 207 (Met207) is an S-methylmethionine.

The protein belongs to the methyltransferase superfamily. LaeA methyltransferase family. Component of the heterotrimeric velvet complex composed of laeA, veA and velB; VeA acting as a bridging protein between laeA and velB. Self-methylates at Met-207.

The protein resides in the nucleus. It carries out the reaction L-methionyl-[protein] + S-adenosyl-L-methionine = S-methyl-L-methionyl-[protein] + S-adenosyl-L-homocysteine. Functionally, methyltransferase that performs automethylation at Met-207. No other methyl-accepting substrate has been identified yet. Component of the velvet transcription factor complex that acts as a global regulator for secondary metabolite gene expression. Controls the expression of the sterigmatocystin, penicillin, and lovastatin gene clusters. Controls light-dependent formation of the velB-vosA complex, veA protein modification, and is required for light-mediated inhibition of sexual development. Within the velvet complex, controls light-dependent secondary metabolism. Involved in the defense response against Drosophila melanogaster larval grazing. The polypeptide is Secondary metabolism regulator laeA (Emericella nidulans (Aspergillus nidulans)).